A 308-amino-acid polypeptide reads, in one-letter code: UDP-N-acetylenolpyruvoylglucosamine reductase (308 aa).

Residues 33-197 enclose the FAD-binding PCMH-type domain; the sequence is TGGNADFYLS…LEASFNLAPG (165 aa). Arg176 is an active-site residue. Ser226 serves as the catalytic Proton donor. Glu296 is a catalytic residue.

It belongs to the MurB family. FAD is required as a cofactor.

The protein resides in the cytoplasm. It carries out the reaction UDP-N-acetyl-alpha-D-muramate + NADP(+) = UDP-N-acetyl-3-O-(1-carboxyvinyl)-alpha-D-glucosamine + NADPH + H(+). It functions in the pathway cell wall biogenesis; peptidoglycan biosynthesis. Its function is as follows. Cell wall formation. This chain is UDP-N-acetylenolpyruvoylglucosamine reductase, found in Staphylococcus carnosus (strain TM300).